The sequence spans 158 residues: 6,7-dimethyl-8-ribityllumazine synthase (158 aa).

5-amino-6-(D-ribitylamino)uracil is bound by residues phenylalanine 23, 61 to 63 (SFE), and 85 to 87 (AVI). 90–91 (ET) contacts (2S)-2-hydroxy-3-oxobutyl phosphate. Histidine 93 acts as the Proton donor in catalysis. A 5-amino-6-(D-ribitylamino)uracil-binding site is contributed by phenylalanine 118. Position 132 (arginine 132) interacts with (2S)-2-hydroxy-3-oxobutyl phosphate.

Belongs to the DMRL synthase family.

It catalyses the reaction (2S)-2-hydroxy-3-oxobutyl phosphate + 5-amino-6-(D-ribitylamino)uracil = 6,7-dimethyl-8-(1-D-ribityl)lumazine + phosphate + 2 H2O + H(+). It functions in the pathway cofactor biosynthesis; riboflavin biosynthesis; riboflavin from 2-hydroxy-3-oxobutyl phosphate and 5-amino-6-(D-ribitylamino)uracil: step 1/2. Catalyzes the formation of 6,7-dimethyl-8-ribityllumazine by condensation of 5-amino-6-(D-ribitylamino)uracil with 3,4-dihydroxy-2-butanone 4-phosphate. This is the penultimate step in the biosynthesis of riboflavin. The protein is 6,7-dimethyl-8-ribityllumazine synthase of Prochlorococcus marinus (strain MIT 9215).